We begin with the raw amino-acid sequence, 214 residues long: Melanoregulin (214 aa).

The Cholesterol-binding sequence motif signature appears at 162–172; the sequence is LSERYLLVVDR. A Phosphoserine modification is found at Ser-213.

Belongs to the melanoregulin family. As to quaternary structure, identified in a complex with RILP and DCTN1; interacts directly with RILP, but does not interact directly with DCTN1. Interacts with PRPH2. Palmitoylated. Palmitoylation is required to maintain the protein at the melanosome membrane. As to expression, detected in melanocytes. Expressed in retina, in retinal pigment epithelium (at protein level). Widely expressed with higher expression in skin, heart, liver, testis and thymus. Detected in retina, in retinal pigment epithelium cells.

Its subcellular location is the apical cell membrane. It localises to the melanosome membrane. The protein localises to the lysosome membrane. The protein resides in the cytoplasmic vesicle membrane. In terms of biological role, probably functions as a cargo-recognition protein that couples cytoplasmic vesicles to the transport machinery. Plays a role in hair pigmentation, a process that involves shedding of melanosome-containing vesicles from melanocytes, followed by phagocytosis of the melanosome-containing vesicles by keratinocytes. Functions on melanosomes as receptor for RILP and the complex formed by RILP and DCTN1, and thereby contributes to retrograde melanosome transport from the cell periphery to the center. Overexpression causes accumulation of late endosomes and/or lysosomes at the microtubule organising center (MTOC) at the center of the cell. Probably binds cholesterol and requires the presence of cholesterol in membranes to function in microtubule-mediated retrograde organelle transport. Binds phosphatidylinositol 3-phosphate, phosphatidylinositol 4-phosphate, phosphatidylinositol 5-phosphate and phosphatidylinositol 3,5-bisphosphate, but not phosphatidylinositol 3,4-bisphosphate or phosphatidylinositol 4,5-bisphosphate. Required for normal phagosome clearing and normal activation of lysosomal enzymes in lysosomes from retinal pigment epithelium cells. Required for normal degradation of the lipofuscin component N-retinylidene-N-retinylethanolamine (A2E) in the eye. May function in membrane fusion and regulate the biogenesis of disk membranes of photoreceptor rod cells. This chain is Melanoregulin (Mreg), found in Mus musculus (Mouse).